A 408-amino-acid chain; its full sequence is D-inositol 3-phosphate glycosyltransferase (408 aa).

His-7 serves as a coordination point for 1D-myo-inositol 3-phosphate. Residues 13 to 14 (QP) and Gly-21 contribute to the UDP-N-acetyl-alpha-D-glucosamine site. 1D-myo-inositol 3-phosphate is bound by residues 18 to 23 (DAGGMN), Lys-76, Tyr-109, Thr-133, and Arg-153. The UDP-N-acetyl-alpha-D-glucosamine site is built by Arg-227, Lys-232, and Val-288. Mg(2+) contacts are provided by Phe-297, Arg-298, and Ala-300. Glu-310 and Glu-318 together coordinate UDP-N-acetyl-alpha-D-glucosamine. Thr-324 serves as a coordination point for Mg(2+).

The protein belongs to the glycosyltransferase group 1 family. MshA subfamily. As to quaternary structure, homodimer.

The enzyme catalyses 1D-myo-inositol 3-phosphate + UDP-N-acetyl-alpha-D-glucosamine = 1D-myo-inositol 2-acetamido-2-deoxy-alpha-D-glucopyranoside 3-phosphate + UDP + H(+). Catalyzes the transfer of a N-acetyl-glucosamine moiety to 1D-myo-inositol 3-phosphate to produce 1D-myo-inositol 2-acetamido-2-deoxy-glucopyranoside 3-phosphate in the mycothiol biosynthesis pathway. This Paenarthrobacter aurescens (strain TC1) protein is D-inositol 3-phosphate glycosyltransferase.